We begin with the raw amino-acid sequence, 326 residues long: NDRG-like protein (326 aa).

Belongs to the NDRG family.

This Dictyostelium discoideum (Social amoeba) protein is NDRG-like protein.